Here is a 195-residue protein sequence, read N- to C-terminus: Thymidine kinase (195 aa).

ATP contacts are provided by residues 15 to 22 (GSMFSGKS) and 88 to 91 (DEVQ). The active-site Proton acceptor is the Glu89. Residues Cys145, Cys148, Cys183, and Cys186 each contribute to the Zn(2+) site.

It belongs to the thymidine kinase family. As to quaternary structure, homotetramer.

The protein resides in the cytoplasm. It carries out the reaction thymidine + ATP = dTMP + ADP + H(+). This chain is Thymidine kinase, found in Bacillus cereus (strain 03BB102).